The chain runs to 215 residues: Proteasome subunit beta inpE (215 aa).

This sequence belongs to the peptidase T1B family.

The protein resides in the cytoplasm. The protein localises to the nucleus. The catalysed reaction is Cleavage of peptide bonds with very broad specificity.. Proteasome subunit beta type-6; part of the inp gene cluster that mediates the biosynthesis of fellutamide B, a mycotoxin that acts as a proteasome inhibitor. In the first step of fellutabmide B biosynthesis inpC activates 3-hydroxydodecanoic acid to generate 3-hydroxydodecanoyl-AMP that is then loaded onto the T0 domain of inpB. The 3-hydroxydodecanoyl-S-phosphopantetheinyl-T0 is sequentially extended with L-Asn and L-Gln by the two CAT modules of inpB. The linear lipodipeptide from inpB is then transferred onto inpA for the addition of the third amino acid, L-Leu. Reductive releasing of the lipotripeptide by the TE domain of inpA produces (2S)-fellutamide B. InpF might be involved in the release and transfer of the lipodipeptide from inpB to inpA. The inp cluster-encoded proteasome subunit inpE confers resistance to internally produced fellutamides. The MFS efflux transporter inpD may contribute to fellutamide resistance as well. The protein is Proteasome subunit beta inpE (inpE) of Emericella nidulans (strain FGSC A4 / ATCC 38163 / CBS 112.46 / NRRL 194 / M139) (Aspergillus nidulans).